Here is a 508-residue protein sequence, read N- to C-terminus: ATP synthase subunit alpha, chloroplastic (508 aa).

171–178 (GDRQTGKT) is a binding site for ATP.

This sequence belongs to the ATPase alpha/beta chains family. In terms of assembly, F-type ATPases have 2 components, CF(1) - the catalytic core - and CF(0) - the membrane proton channel. CF(1) has five subunits: alpha(3), beta(3), gamma(1), delta(1), epsilon(1). CF(0) has four main subunits: a, b, b' and c.

The protein resides in the plastid. Its subcellular location is the chloroplast thylakoid membrane. The catalysed reaction is ATP + H2O + 4 H(+)(in) = ADP + phosphate + 5 H(+)(out). Produces ATP from ADP in the presence of a proton gradient across the membrane. The alpha chain is a regulatory subunit. This Gnetum parvifolium (Small-leaved jointfir) protein is ATP synthase subunit alpha, chloroplastic.